The primary structure comprises 430 residues: MHVSTLLVAVLLPLALSKPTPRKKTSSFKVHLARRGETEYYRDGPTDLQRAYAKYGIPTTHEMEGYHPQPISKLPGNSKATAGSGKEGVESQDEKGEVVNNPTDHDIQFLSPVTIGGQPFIMNFDTGSSDTWVMNTQMTDEEAKKDHHLYDPSKSKTASKLVDQNFDIKYGDKTHASGPVYSDVMDIGGATVRNQAIGLPSKVAASLAEDKTSDGLVGLAMTKLNTIRPVKQKTFFENLAEDLDEPVFTAQLRHGKMGSYEFGAIDKSKYHGDLIKVPVINENGFWEIPCSLYSVGKLDKIQTIQNGTGTAILDTGTTLLVLDEKIVKAYYAQVPGARYDPTRFAGWVYPCNSPMPSLFLAVGTDHMAIIPSSLLTFQSYGPGPDGVETCYGGLQSNNAGGIQILGDVFFKALFVVFDQRGPSISLAPHA.

Positions 1–17 (MHVSTLLVAVLLPLALS) are cleaved as a signal peptide. Residues 18-87 (KPTPRKKTSS…SKATAGSGKE (70 aa)) constitute a propeptide, activation peptide. Residues 61–104 (HEMEGYHPQPISKLPGNSKATAGSGKEGVESQDEKGEVVNNPTD) are disordered. Residues 87 to 104 (EGVESQDEKGEVVNNPTD) show a composition bias toward basic and acidic residues. The Peptidase A1 domain maps to 109–427 (FLSPVTIGGQ…DQRGPSISLA (319 aa)). Asp-125 is a catalytic residue. N-linked (GlcNAc...) asparagine glycosylation occurs at Asn-306. Asp-314 is a catalytic residue.

It belongs to the peptidase A1 family.

Its subcellular location is the secreted. Functionally, probable secreted aspartic-type endopeptidase which contributes to virulence. In Trichophyton verrucosum (strain HKI 0517), this protein is Probable aspartic-type endopeptidase TRV_06366.